A 132-amino-acid polypeptide reads, in one-letter code: Prefoldin subunit alpha (132 aa).

Belongs to the prefoldin subunit alpha family. Heterohexamer of two alpha and four beta subunits.

It is found in the cytoplasm. Functionally, molecular chaperone capable of stabilizing a range of proteins. Seems to fulfill an ATP-independent, HSP70-like function in archaeal de novo protein folding. This chain is Prefoldin subunit alpha, found in Pyrobaculum islandicum (strain DSM 4184 / JCM 9189 / GEO3).